The primary structure comprises 203 residues: Outer-membrane lipoprotein LolB (203 aa).

The N-terminal stretch at 1-16 is a signal peptide; sequence MKTFLPCLFFLLILVG. Cys-17 is lipidated: N-palmitoyl cysteine. A lipid anchor (S-diacylglycerol cysteine) is attached at Cys-17.

This sequence belongs to the LolB family. In terms of assembly, monomer.

The protein resides in the cell outer membrane. Plays a critical role in the incorporation of lipoproteins in the outer membrane after they are released by the LolA protein. The chain is Outer-membrane lipoprotein LolB from Psychromonas ingrahamii (strain DSM 17664 / CCUG 51855 / 37).